We begin with the raw amino-acid sequence, 383 residues long: MSLKQHTQAIFRQQFSHEPNITIKAPGRVNLIGEHTDYNDGFVLPCAIDYETVISCSKRDDRQIHVIAADYDNQQDIFSLDEPIVPHAQYRWADYVRGVVKHLQLRHADFGGASLVISGNVPQGAGLSSSASLEVAVGQALQSLYQLPLSGVELALNGQEAENQFVGCNCGIMDQLISALGQQDHALLIDCRTLETRAVPMPENVAVVIINSNVKRGLVDSEYNTRRQQCETAARFFGVKALRDVDPNLFFSIQDELDPVVAKRARHVITENERTLTAADALAAGDLKLMGQLMHESHISMRDDFEITVPPIDSLVDIVKSVIGEQGGVRMTGGGFGGCIVALMPNSLVEQVRAAVAQQYPAYSGGRTETFYVCQASQGAGLC.

Substrate is bound at residue 34-37; sequence EHTD. An ATP-binding site is contributed by 124–130; that stretch reads GAGLSSS. 2 residues coordinate Mg(2+): Ser130 and Glu162. The active-site Proton acceptor is Asp174. A substrate-binding site is contributed by Tyr223.

This sequence belongs to the GHMP kinase family. GalK subfamily.

The protein resides in the cytoplasm. It catalyses the reaction alpha-D-galactose + ATP = alpha-D-galactose 1-phosphate + ADP + H(+). Its pathway is carbohydrate metabolism; galactose metabolism. Functionally, catalyzes the transfer of the gamma-phosphate of ATP to D-galactose to form alpha-D-galactose-1-phosphate (Gal-1-P). In Yersinia enterocolitica serotype O:8 / biotype 1B (strain NCTC 13174 / 8081), this protein is Galactokinase.